A 99-amino-acid polypeptide reads, in one-letter code: Large ribosomal subunit protein eL21 (99 aa).

Residues M1–K18 show a composition bias toward basic residues. Residues M1–V26 are disordered.

The protein belongs to the eukaryotic ribosomal protein eL21 family.

This Metallosphaera sedula (strain ATCC 51363 / DSM 5348 / JCM 9185 / NBRC 15509 / TH2) protein is Large ribosomal subunit protein eL21.